Consider the following 392-residue polypeptide: MKYVVLLGDGMADWPMEALGGRTPLQVARKPNMDSIARIGRCGLARTVPEGMTPGSDVANLSIMGYDPRRYYTGRAPLEAAAMRIPLGEKEVAFRCNFVTVMDGIMDDYSAGHITSEEGAEIAESLKKVIPGGRIYPGVSYRNIVVLKVCRDAVCTPPHDIMGKPISDHLPRGDDAHILIDIMERARPLLEEHPVNRRRVSMGLKPANMIWLWGQGPAPSMPRFHEIYGLKGAVISAVDLLKGLGVCAGWRVIDVPGATGTIDTNYAGKVRAALEALGSVDLVYLHIEAPDEAAHSGDVEQKIRAIELFDERVVGPMIHGLERSGEAWRVLLLPDHPTPIEIRTHSTDPVPFAIAGSGVCVDSVDAFDEISASEGGYGMIEGNDLIRLLIAG.

Belongs to the BPG-independent phosphoglycerate mutase family. A-PGAM subfamily.

It carries out the reaction (2R)-2-phosphoglycerate = (2R)-3-phosphoglycerate. The protein operates within carbohydrate degradation; glycolysis; pyruvate from D-glyceraldehyde 3-phosphate: step 3/5. In terms of biological role, catalyzes the interconversion of 2-phosphoglycerate and 3-phosphoglycerate. The sequence is that of 2,3-bisphosphoglycerate-independent phosphoglycerate mutase from Methanothrix thermoacetophila (strain DSM 6194 / JCM 14653 / NBRC 101360 / PT) (Methanosaeta thermophila).